Consider the following 245-residue polypeptide: Orotidine 5'-phosphate decarboxylase (245 aa).

Substrate-binding positions include Asp22, Lys44, 71–80 (DLKFHDIPNT), Thr131, Arg192, Gln201, Gly221, and Arg222. The Proton donor role is filled by Lys73.

The protein belongs to the OMP decarboxylase family. Type 1 subfamily. In terms of assembly, homodimer.

The enzyme catalyses orotidine 5'-phosphate + H(+) = UMP + CO2. The protein operates within pyrimidine metabolism; UMP biosynthesis via de novo pathway; UMP from orotate: step 2/2. Its function is as follows. Catalyzes the decarboxylation of orotidine 5'-monophosphate (OMP) to uridine 5'-monophosphate (UMP). In Escherichia coli O6:K15:H31 (strain 536 / UPEC), this protein is Orotidine 5'-phosphate decarboxylase.